Here is a 335-residue protein sequence, read N- to C-terminus: Nucleoid-associated protein YejK (335 aa).

Belongs to the YejK family.

The protein resides in the cytoplasm. The protein localises to the nucleoid. The protein is Nucleoid-associated protein YejK of Salmonella arizonae (strain ATCC BAA-731 / CDC346-86 / RSK2980).